Consider the following 359-residue polypeptide: Histidinol-phosphate aminotransferase (359 aa).

Residue Lys-217 is modified to N6-(pyridoxal phosphate)lysine.

Belongs to the class-II pyridoxal-phosphate-dependent aminotransferase family. Histidinol-phosphate aminotransferase subfamily. Homodimer. Pyridoxal 5'-phosphate serves as cofactor.

The enzyme catalyses L-histidinol phosphate + 2-oxoglutarate = 3-(imidazol-4-yl)-2-oxopropyl phosphate + L-glutamate. It functions in the pathway amino-acid biosynthesis; L-histidine biosynthesis; L-histidine from 5-phospho-alpha-D-ribose 1-diphosphate: step 7/9. This Salmonella newport (strain SL254) protein is Histidinol-phosphate aminotransferase.